A 558-amino-acid polypeptide reads, in one-letter code: Adenine deaminase (558 aa).

Belongs to the metallo-dependent hydrolases superfamily. Adenine deaminase family. Mn(2+) is required as a cofactor.

It catalyses the reaction adenine + H2O + H(+) = hypoxanthine + NH4(+). The sequence is that of Adenine deaminase from Deinococcus deserti (strain DSM 17065 / CIP 109153 / LMG 22923 / VCD115).